The sequence spans 280 residues: Adenosylcobinamide-GDP ribazoletransferase (280 aa).

Helical transmembrane passes span 44 to 64 (GVGV…LFVL), 69 to 89 (STPL…TGAF), 111 to 131 (LVIM…MLAL), 135 to 155 (VALL…ALFV), 189 to 209 (ISVA…ALVI), and 226 to 246 (ALLQ…AVMA).

The protein belongs to the CobS family. The cofactor is Mg(2+).

It is found in the cell inner membrane. The catalysed reaction is alpha-ribazole + adenosylcob(III)inamide-GDP = adenosylcob(III)alamin + GMP + H(+). It catalyses the reaction alpha-ribazole 5'-phosphate + adenosylcob(III)inamide-GDP = adenosylcob(III)alamin 5'-phosphate + GMP + H(+). It participates in cofactor biosynthesis; adenosylcobalamin biosynthesis; adenosylcobalamin from cob(II)yrinate a,c-diamide: step 7/7. Functionally, joins adenosylcobinamide-GDP and alpha-ribazole to generate adenosylcobalamin (Ado-cobalamin). Also synthesizes adenosylcobalamin 5'-phosphate from adenosylcobinamide-GDP and alpha-ribazole 5'-phosphate. The chain is Adenosylcobinamide-GDP ribazoletransferase from Albidiferax ferrireducens (strain ATCC BAA-621 / DSM 15236 / T118) (Rhodoferax ferrireducens).